The sequence spans 361 residues: D-alanine--D-alanine ligase (361 aa).

An ATP-grasp domain is found at 144–350 (KLCVSEAGIA…FPELCDRLLQ (207 aa)). 177–232 (PETLIYPVFVKPAHLGSSVGISKVSVQGELPEALAHACNLDTKVLIEQAMHGKEIE) contributes to the ATP binding site. The Mg(2+) site is built by aspartate 303, glutamate 317, and asparagine 319.

This sequence belongs to the D-alanine--D-alanine ligase family. Mg(2+) is required as a cofactor. The cofactor is Mn(2+).

It is found in the cytoplasm. The catalysed reaction is 2 D-alanine + ATP = D-alanyl-D-alanine + ADP + phosphate + H(+). It functions in the pathway cell wall biogenesis; peptidoglycan biosynthesis. Cell wall formation. The polypeptide is D-alanine--D-alanine ligase (Chlorobium phaeovibrioides (strain DSM 265 / 1930) (Prosthecochloris vibrioformis (strain DSM 265))).